We begin with the raw amino-acid sequence, 335 residues long: Proline racemase (335 aa).

Cysteine 91 serves as the catalytic Proton acceptor. Cysteine 256 (proton donor) is an active-site residue.

Belongs to the proline racemase family.

The catalysed reaction is L-proline = D-proline. Its activity is regulated as follows. Inhibited by pyrrole-2-carboxylate in vitro. Its function is as follows. Catalyzes the reversible interconversion of L- and D-proline. Likely functions as the proline racemase necessary for D-proline generation in order to discriminate it from the L-proline used for protein synthesis. The chain is Proline racemase from Acetoanaerobium sticklandii (strain ATCC 12662 / DSM 519 / JCM 1433 / CCUG 9281 / NCIMB 10654 / HF) (Clostridium sticklandii).